A 188-amino-acid chain; its full sequence is Elongation factor P (188 aa).

Position 34 is an N6-(3,6-diaminohexanoyl)-5-hydroxylysine (Lys-34).

It belongs to the elongation factor P family. In terms of processing, may be beta-lysylated on the epsilon-amino group of Lys-34 by the combined action of EpmA and EpmB, and then hydroxylated on the C5 position of the same residue by EpmC (if this protein is present). Lysylation is critical for the stimulatory effect of EF-P on peptide-bond formation. The lysylation moiety may extend toward the peptidyltransferase center and stabilize the terminal 3-CCA end of the tRNA. Hydroxylation of the C5 position on Lys-34 may allow additional potential stabilizing hydrogen-bond interactions with the P-tRNA.

The protein resides in the cytoplasm. It participates in protein biosynthesis; polypeptide chain elongation. Involved in peptide bond synthesis. Alleviates ribosome stalling that occurs when 3 or more consecutive Pro residues or the sequence PPG is present in a protein, possibly by augmenting the peptidyl transferase activity of the ribosome. Modification of Lys-34 is required for alleviation. This is Elongation factor P from Cronobacter sakazakii (strain ATCC BAA-894) (Enterobacter sakazakii).